Consider the following 857-residue polypeptide: DNA mismatch repair protein MutS (857 aa).

608-615 (GPNMSGKS) contacts ATP.

Belongs to the DNA mismatch repair MutS family.

Its function is as follows. This protein is involved in the repair of mismatches in DNA. It is possible that it carries out the mismatch recognition step. This protein has a weak ATPase activity. The chain is DNA mismatch repair protein MutS from Lacticaseibacillus paracasei (strain ATCC 334 / BCRC 17002 / CCUG 31169 / CIP 107868 / KCTC 3260 / NRRL B-441) (Lactobacillus paracasei).